We begin with the raw amino-acid sequence, 332 residues long: 4-hydroxy-3-methylbut-2-enyl diphosphate reductase (332 aa).

C34 is a [4Fe-4S] cluster binding site. (2E)-4-hydroxy-3-methylbut-2-enyl diphosphate is bound by residues H63 and H96. Dimethylallyl diphosphate is bound by residues H63 and H96. Residues H63 and H96 each coordinate isopentenyl diphosphate. Residue C118 participates in [4Fe-4S] cluster binding. H146 contributes to the (2E)-4-hydroxy-3-methylbut-2-enyl diphosphate binding site. H146 provides a ligand contact to dimethylallyl diphosphate. Isopentenyl diphosphate is bound at residue H146. The active-site Proton donor is the E148. (2E)-4-hydroxy-3-methylbut-2-enyl diphosphate is bound at residue T186. C216 lines the [4Fe-4S] cluster pocket. 4 residues coordinate (2E)-4-hydroxy-3-methylbut-2-enyl diphosphate: S244, S245, N246, and S289. 4 residues coordinate dimethylallyl diphosphate: S244, S245, N246, and S289. 4 residues coordinate isopentenyl diphosphate: S244, S245, N246, and S289.

This sequence belongs to the IspH family. [4Fe-4S] cluster serves as cofactor.

The catalysed reaction is isopentenyl diphosphate + 2 oxidized [2Fe-2S]-[ferredoxin] + H2O = (2E)-4-hydroxy-3-methylbut-2-enyl diphosphate + 2 reduced [2Fe-2S]-[ferredoxin] + 2 H(+). The enzyme catalyses dimethylallyl diphosphate + 2 oxidized [2Fe-2S]-[ferredoxin] + H2O = (2E)-4-hydroxy-3-methylbut-2-enyl diphosphate + 2 reduced [2Fe-2S]-[ferredoxin] + 2 H(+). The protein operates within isoprenoid biosynthesis; dimethylallyl diphosphate biosynthesis; dimethylallyl diphosphate from (2E)-4-hydroxy-3-methylbutenyl diphosphate: step 1/1. It functions in the pathway isoprenoid biosynthesis; isopentenyl diphosphate biosynthesis via DXP pathway; isopentenyl diphosphate from 1-deoxy-D-xylulose 5-phosphate: step 6/6. In terms of biological role, catalyzes the conversion of 1-hydroxy-2-methyl-2-(E)-butenyl 4-diphosphate (HMBPP) into a mixture of isopentenyl diphosphate (IPP) and dimethylallyl diphosphate (DMAPP). Acts in the terminal step of the DOXP/MEP pathway for isoprenoid precursor biosynthesis. The protein is 4-hydroxy-3-methylbut-2-enyl diphosphate reductase of Mycolicibacterium paratuberculosis (strain ATCC BAA-968 / K-10) (Mycobacterium paratuberculosis).